Consider the following 1198-residue polypeptide: Structural polyprotein (1198 aa).

The interval 2–15 (TKKPGGPGKNRAIN) is interaction with host EXOC1. The segment at 37-72 (LLDGRGPVRFVLALITFFKFTALAPTKALLGRWRAV) is hydrophobic; homodimerization of capsid protein C. Positions 106 to 127 (GGNESSIMWLASLAIVIACAGA) are cleaved as a propeptide — ER anchor for the capsid protein C, removed in mature form by serine protease NS3. A helical transmembrane segment spans residues 110 to 130 (SSIMWLASLAIVIACAGAMKL). Asparagine 142 carries an N-linked (GlcNAc...) asparagine; by host glycan. The next 2 helical transmembrane spans lie at 254-274 (WIIRNPGYAFLAAALGWMLGS) and 280-294 (VVFTILLLLVAPAYS). Cystine bridges form between cysteine 297/cysteine 324, cysteine 354/cysteine 410, cysteine 354/cysteine 415, cysteine 368/cysteine 399, cysteine 386/cysteine 410, and cysteine 386/cysteine 415. Residues 392-405 (DRGWGNGCGLFGKG) form a fusion peptide region. Asparagine 448 is a glycosylation site (N-linked (GlcNAc...) asparagine; by host). 2 disulfide bridges follow: cysteine 484-cysteine 581 and cysteine 598-cysteine 629. A run of 2 helical transmembrane segments spans residues 747 to 767 (FGGMSWITQGLMGALLLWMGV) and 774 to 794 (IALAFLATGGVLVFLATNVHA). 6 cysteine pairs are disulfide-bonded: cysteine 798/cysteine 809, cysteine 849/cysteine 937, cysteine 973/cysteine 1017, cysteine 1074/cysteine 1123, cysteine 1085/cysteine 1106, and cysteine 1107/cysteine 1110. N-linked (GlcNAc...) asparagine; by host glycosylation is found at asparagine 924 and asparagine 1001. The interval 1151-1178 (MIDPFSAGPSGDVSGHPGGPSQEVDGQI) is disordered.

In terms of assembly, homodimer. Interacts (via N-terminus) with host EXOC1 (via C-terminus); this interaction results in EXOC1 degradation through the proteasome degradation pathway. Interacts with host CAPRIN1; this interaction is involved in the suppression of the integrated stress response. As to quaternary structure, forms heterodimers with envelope protein E in the endoplasmic reticulum and Golgi. Homodimer; in the endoplasmic reticulum and Golgi. Interacts with protein prM. Interacts with non-structural protein 1. Post-translationally, genome polyprotein: Specific enzymatic cleavages in vivo yield mature proteins. Cleavages in the lumen of endoplasmic reticulum are performed by host signal peptidase, whereas cleavages in the cytoplasmic side are performed by serine protease NS3. Signal cleavage at the 2K-4B site requires a prior NS3 protease-mediated cleavage at the 4A-2K site. In terms of processing, cleaved in post-Golgi vesicles by a host furin, releasing the mature small envelope protein M, and peptide pr. This cleavage is incomplete as up to 30% of viral particles still carry uncleaved prM. N-glycosylated.

It is found in the secreted. The protein resides in the virion membrane. It localises to the host endoplasmic reticulum membrane. Functionally, plays a role in virus budding by binding to the cell membrane and gathering the viral RNA into a nucleocapsid that forms the core of a mature virus particle. During virus entry, may induce genome penetration into the host cytoplasm after hemifusion induced by the surface proteins. Can migrate to the cell nucleus where it modulates host functions. Overcomes the anti-viral effects of host EXOC1 by sequestering and degrading the latter through the proteasome degradation pathway. Inhibits the integrated stress response (ISR) in the infected cell by binding to host CAPRIN1. In terms of biological role, inhibits RNA silencing by interfering with host Dicer. Its function is as follows. Prevents premature fusion activity of envelope proteins in trans-Golgi by binding to envelope protein E at pH6.0. After virion release in extracellular space, gets dissociated from E dimers. Acts as a chaperone for envelope protein E during intracellular virion assembly by masking and inactivating envelope protein E fusion peptide. prM is the only viral peptide matured by host furin in the trans-Golgi network probably to avoid catastrophic activation of the viral fusion activity in acidic Golgi compartment prior to virion release. prM-E cleavage is inefficient, and many virions are only partially matured. These uncleaved prM would play a role in immune evasion. Functionally, may play a role in virus budding. Exerts cytotoxic effects by activating a mitochondrial apoptotic pathway through M ectodomain. May display a viroporin activity. In terms of biological role, binds to host cell surface receptor and mediates fusion between viral and cellular membranes. Envelope protein is synthesized in the endoplasmic reticulum in the form of heterodimer with protein prM. They play a role in virion budding in the ER, and the newly formed immature particle is covered with 60 spikes composed of heterodimer between precursor prM and envelope protein E. The virion is transported to the Golgi apparatus where the low pH causes dissociation of PrM-E heterodimers and formation of E homodimers. prM-E cleavage is inefficient, and many virions are only partially matured. These uncleaved prM would play a role in immune evasion. The sequence is that of Structural polyprotein from Ardeidae (herons).